Here is a 336-residue protein sequence, read N- to C-terminus: Probable deoxyhypusine synthase (336 aa).

Lys308 functions as the Nucleophile in the catalytic mechanism.

It belongs to the deoxyhypusine synthase family. The cofactor is NAD(+).

It carries out the reaction [eIF5A protein]-L-lysine + spermidine = [eIF5A protein]-deoxyhypusine + propane-1,3-diamine. Its pathway is protein modification; eIF5A hypusination. Its function is as follows. Catalyzes the NAD-dependent oxidative cleavage of spermidine and the subsequent transfer of the butylamine moiety of spermidine to the epsilon-amino group of a specific lysine residue of the eIF-5A precursor protein to form the intermediate deoxyhypusine residue. In Thermococcus gammatolerans (strain DSM 15229 / JCM 11827 / EJ3), this protein is Probable deoxyhypusine synthase.